Here is a 237-residue protein sequence, read N- to C-terminus: GATA zinc finger domain-containing protein 18 (237 aa).

Low complexity-rich tracts occupy residues 1-28 and 87-118; these read MAHN…KNNN and NTST…PNSN. Disordered stretches follow at residues 1 to 31, 78 to 119, and 140 to 186; these read MAHN…NSEY, PTNT…NSNL, and FEEG…GGCS. Residues 140–151 show a composition bias toward acidic residues; that stretch reads FEEGDDEEETSS. Positions 152-167 are enriched in low complexity; the sequence is DSDSSSSSSTSSSSSE. A GATA-type zinc finger spans residues 185 to 212; it reads CSICKTQETPYWRKGKDGDKTVYLCNAC.

The chain is GATA zinc finger domain-containing protein 18 (gtaR) from Dictyostelium discoideum (Social amoeba).